Here is a 490-residue protein sequence, read N- to C-terminus: Phosphoglucosamine mutase (490 aa).

Catalysis depends on Ser-139, which acts as the Phosphoserine intermediate. The Mg(2+) site is built by Ser-139, Asp-279, Asp-281, and Asp-283. Ser-139 carries the phosphoserine modification.

It belongs to the phosphohexose mutase family. Requires Mg(2+) as cofactor. Post-translationally, activated by phosphorylation.

The enzyme catalyses alpha-D-glucosamine 1-phosphate = D-glucosamine 6-phosphate. Its function is as follows. Catalyzes the conversion of glucosamine-6-phosphate to glucosamine-1-phosphate. This chain is Phosphoglucosamine mutase, found in Trichormus variabilis (strain ATCC 29413 / PCC 7937) (Anabaena variabilis).